Here is a 404-residue protein sequence, read N- to C-terminus: Multidrug resistance protein MdtG (404 aa).

Helical transmembrane passes span 19-39, 56-76, 90-110, 113-133, 149-169, 171-191, 222-242, 254-274, 288-308, 317-337, and 376-396; these read LGCF…PLYV, LVFS…GGLA, LGMA…QFLI, ALLG…ATQV, GVSG…HYGL, PVFF…FFFI, LFVT…ILTL, IAFI…LSAP, ILIV…FVQT, FLLG…LVYN, and AVFC…WNSL.

It belongs to the major facilitator superfamily. DHA1 family. MdtG (TC 2.A.1.2.20) subfamily.

It localises to the cell inner membrane. The polypeptide is Multidrug resistance protein MdtG (Salmonella paratyphi C (strain RKS4594)).